A 66-amino-acid chain; its full sequence is MPKQKTHRASAKRFKRTGNGGLKRFRAYTSHRFHGKTVKQRRQLRKSSMVSKGDFKRIRRMVATMR.

The span at 1 to 16 shows a compositional bias: basic residues; it reads MPKQKTHRASAKRFKR. Residues 1 to 20 are disordered; it reads MPKQKTHRASAKRFKRTGNG.

Belongs to the bacterial ribosomal protein bL35 family.

The protein is Large ribosomal subunit protein bL35 of Lactococcus lactis subsp. lactis (strain IL1403) (Streptococcus lactis).